Consider the following 446-residue polypeptide: Phosphoglucosamine mutase (446 aa).

S101 (phosphoserine intermediate) is an active-site residue. Mg(2+)-binding residues include S101, D240, D242, and D244. The residue at position 101 (S101) is a Phosphoserine.

Belongs to the phosphohexose mutase family. Mg(2+) serves as cofactor. Post-translationally, activated by phosphorylation.

It carries out the reaction alpha-D-glucosamine 1-phosphate = D-glucosamine 6-phosphate. Functionally, catalyzes the conversion of glucosamine-6-phosphate to glucosamine-1-phosphate. The sequence is that of Phosphoglucosamine mutase from Pseudomonas putida (strain ATCC 700007 / DSM 6899 / JCM 31910 / BCRC 17059 / LMG 24140 / F1).